A 227-amino-acid polypeptide reads, in one-letter code: Enolase-phosphatase E1 (227 aa).

Positions 11 and 13 each coordinate Mg(2+). Substrate contacts are provided by residues 118–119 and K161; that span reads SS. Residue D186 coordinates Mg(2+).

This sequence belongs to the HAD-like hydrolase superfamily. MasA/MtnC family. As to quaternary structure, monomer. Mg(2+) serves as cofactor.

The protein localises to the cytoplasm. It is found in the nucleus. It catalyses the reaction 5-methylsulfanyl-2,3-dioxopentyl phosphate + H2O = 1,2-dihydroxy-5-(methylsulfanyl)pent-1-en-3-one + phosphate. It functions in the pathway amino-acid biosynthesis; L-methionine biosynthesis via salvage pathway; L-methionine from S-methyl-5-thio-alpha-D-ribose 1-phosphate: step 3/6. The protein operates within amino-acid biosynthesis; L-methionine biosynthesis via salvage pathway; L-methionine from S-methyl-5-thio-alpha-D-ribose 1-phosphate: step 4/6. Its function is as follows. Bifunctional enzyme that catalyzes the enolization of 2,3-diketo-5-methylthiopentyl-1-phosphate (DK-MTP-1-P) into the intermediate 2-hydroxy-3-keto-5-methylthiopentenyl-1-phosphate (HK-MTPenyl-1-P), which is then dephosphorylated to form the acireductone 1,2-dihydroxy-3-keto-5-methylthiopentene (DHK-MTPene). The polypeptide is Enolase-phosphatase E1 (Saccharomyces cerevisiae (strain YJM789) (Baker's yeast)).